Here is a 250-residue protein sequence, read N- to C-terminus: MLTFIGLGLYDKTDVSEKGLAMIRSADYVFLEGYTSRLMGTNITELEAFYKKPVRLLLRADVEQHPDELLDCAARGNTVFLCAGDPMVSTTHADLRIRAAERGIPTAIIHGSSIVSAVCGLSGLQNYRFGKSCSVPFPQGNWAPSSPLDVILENRTNRLHTLVYLDIQDDRYMTVNEGICLLEAMAQKKQVAIPFYVGVARAGSETSLVRAGTAETLRSADFGPPLHILIVPGELHDMEREYLARFAGLC.

S-adenosyl-L-methionine is bound by residues Leu-9, Asp-85, Val-88, 113–114, Leu-165, Ala-202, and His-227; that span reads SI.

This sequence belongs to the diphthine synthase family. In terms of assembly, homodimer.

It catalyses the reaction 2-[(3S)-amino-3-carboxypropyl]-L-histidyl-[translation elongation factor 2] + 3 S-adenosyl-L-methionine = diphthine-[translation elongation factor 2] + 3 S-adenosyl-L-homocysteine + 3 H(+). It functions in the pathway protein modification; peptidyl-diphthamide biosynthesis. S-adenosyl-L-methionine-dependent methyltransferase that catalyzes the trimethylation of the amino group of the modified target histidine residue in translation elongation factor 2 (EF-2), to form an intermediate called diphthine. The three successive methylation reactions represent the second step of diphthamide biosynthesis. The sequence is that of Diphthine synthase from Methanoregula boonei (strain DSM 21154 / JCM 14090 / 6A8).